A 265-amino-acid chain; its full sequence is Mlc titration factor A (265 aa).

Residues His-111, His-148, His-152, and Glu-211 each coordinate Zn(2+).

Belongs to the MtfA family. As to quaternary structure, interacts with Mlc. The cofactor is Zn(2+).

It is found in the cytoplasm. In terms of biological role, involved in the modulation of the activity of the glucose-phosphotransferase system (glucose-PTS). Interacts with the transcriptional repressor Mlc, preventing its interaction with DNA and leading to the modulation of expression of genes regulated by Mlc, including ptsG, which encodes the PTS system glucose-specific EIICB component. Functionally, shows zinc-dependent metallopeptidase activity. This Cronobacter sakazakii (strain ATCC BAA-894) (Enterobacter sakazakii) protein is Mlc titration factor A.